The sequence spans 1431 residues: SLPSLLTRLEQMPDYSIFRGYIIHYNLASAIESADAYTVFVPNNEAIENYIREKKATSLKEDILRYHVVLGEKLLKNDLHNGMHRETMLGFSYLLAFFLRNDQLYVNEAPINYTNVATDKGVIHGLEKVLEIQKNRCDNNDTIIVRGECGKCSQQAPCPLETKPLRETRKCIYSIYFMGKRSVFIGCQPQCVRTIITRACCAGFFGPQCQACPGRGQNVCSGNGFCLDGVNGTGTCQCGLGFNGTACETCTEGKYGIHCDQACSCVHGRCSQGPLGDGSCDCDVGWRGVKCDMEITTDNCNGTCHTSANCLLDPDGKASCKCAAGFRGNGTVCTAINACETSNGGCSTKADCKRTTPGNRVCVCKAGYTGDGIVCLEINPCLENHGGCDRNAECTQTGPNQAVCNCLPKYTGDGKVCSLINVCLTNNGGCSPFAFCNYTEQDQRICTCKPDYTGDGIVCRGSIYGELPKNPSTSQYFFQLQEHAVRELAGPGPFTVFAPLSSSFNHEPRIKDWDQQGLMSQVLRYHVVGCQQLLLDNLKVTTSATTLQGEPVSISVSQDTVFINNEAKVLSSDIISTNGVIHVIDKLLSPKNLLITPKDALGRVLQNLTTVAANHGYTKFSKLIQDSGLLSVITDSIHTPVTVFWPTDKALEALPPEQQDFLFNQDNKDKLKSYLKFHVIRDSKALASDLPRSASWKTLQGSELSVRCGTGSDIGELFLNEQMCRFIHRGLLFDVGVAYGIDCLLMNPTLGGRCDTFTTFDIPGECGSCIFTPKCPLKSKPKGVKKKCIYNPLPFRRNVEGCQNLCTVVIQTPRCCHGYFMPDCQACPGGPDTPCNNRGMCRDLYTPMGQCLCHTGFNGTACELCWHGRFGPDCQPRSCSEHGQCDEGITGSGECLCETGWTAASCDTPTAVFAVCTPACSVHATCTENNTCVCNLNYEGDGITCTVVDFCKQNNGGCAKVAKCSQKGTQVSCSCKKGYKGDGYSCIEIDPCADGVNGGCHEHATCRMTGPGKHKCECKSHYVGDGVDCEPEQLPLDRCLQDNGQCHPDASCADLYFQDTTVGVFHLRSPLGQYKLTFDKAKEACAKEAATIATYNQLSYAQKAKYHLCSAGWLESGRVAYPTTYASQKCGANVVGIVDYGSRANKSEMWDVFCYRMKDVNCTCKAGYVGDGFSCSGNLLQVLMSFPSLTNFLTEVLAFSKSSARGQAFLKHLTDLSIRGTLFVPQNSGLPGNKSLSGRDIEHHLTNVNVSFYNDLVNGTFLRTMLGSQLLITFSQDQLHQETRFVDGRSILQWDIIAANGILHIISEPLRAPPTAATAAHSGLGTGIFCAVVLVTGAIALAAYSYFRLKQRTTGFQRFDQKRTLMSWLLASSSPRISQTLCMRPQRRHPQSPPVTPSQTLENRIWRTATLWGHCGPDMRSQQATTVTVPR.

The Extracellular portion of the chain corresponds to 1-1322 (SLPSLLTRLE…PPTAATAAHS (1322 aa)). In terms of domain architecture, FAS1 spans 2-130 (LPSLLTRLEQ…GVIHGLEKVL (129 aa)). Asparagine 112 and asparagine 140 each carry an N-linked (GlcNAc...) asparagine glycan. The 66-residue stretch at 207–272 (PQCQACPGRG…CSCVHGRCSQ (66 aa)) folds into the Laminin EGF-like 1 domain. Cystine bridges form between cysteine 212–cysteine 226, cysteine 220–cysteine 236, cysteine 238–cysteine 247, cysteine 259–cysteine 270, cysteine 263–cysteine 280, cysteine 282–cysteine 291, cysteine 300–cysteine 310, cysteine 304–cysteine 320, cysteine 322–cysteine 333, cysteine 339–cysteine 352, cysteine 346–cysteine 362, cysteine 364–cysteine 375, cysteine 381–cysteine 394, cysteine 388–cysteine 404, cysteine 406–cysteine 417, cysteine 423–cysteine 436, cysteine 430–cysteine 446, and cysteine 448–cysteine 459. 2 N-linked (GlcNAc...) asparagine glycosylation sites follow: asparagine 231 and asparagine 243. EGF-like domains lie at 296-334 (TTDN…TVCT), 335-376 (AINA…IVCL), 377-418 (EINP…KVCS), and 419-460 (LINV…IVCR). An N-linked (GlcNAc...) asparagine glycan is attached at asparagine 301. N-linked (GlcNAc...) asparagine glycosylation is present at asparagine 329. A glycan (N-linked (GlcNAc...) asparagine) is linked at asparagine 437. FAS1 domains are found at residues 460-588 (RGSI…DKLL) and 604-745 (VLQN…DCLL). Residue asparagine 607 is glycosylated (N-linked (GlcNAc...) asparagine). Positions 822 to 887 (PDCQACPGGP…SCSEHGQCDE (66 aa)) constitute a Laminin EGF-like 2 domain. Cystine bridges form between cysteine 827–cysteine 841, cysteine 835–cysteine 851, cysteine 853–cysteine 862, cysteine 874–cysteine 885, cysteine 879–cysteine 895, and cysteine 897–cysteine 906. Residue asparagine 858 is glycosylated (N-linked (GlcNAc...) asparagine). Asparagine 929 carries an N-linked (GlcNAc...) asparagine glycan. EGF-like domains are found at residues 947 to 987 (VVDF…YSCI) and 988 to 1030 (EIDP…VDCE). 8 disulfides stabilise this stretch: cysteine 951/cysteine 964, cysteine 958/cysteine 973, cysteine 975/cysteine 986, cysteine 992/cysteine 1006, cysteine 1000/cysteine 1016, cysteine 1018/cysteine 1029, cysteine 1085/cysteine 1154, and cysteine 1109/cysteine 1130. In terms of domain architecture, Link spans 1063–1156 (GVFHLRSPLG…SEMWDVFCYR (94 aa)). 5 N-linked (GlcNAc...) asparagine glycosylation sites follow: asparagine 1145, asparagine 1161, asparagine 1233, asparagine 1249, and asparagine 1258. Residues 1176–1310 (SGNLLQVLMS…GILHIISEPL (135 aa)) form the FAS1 4 domain. The helical transmembrane segment at 1323-1343 (GLGTGIFCAVVLVTGAIALAA) threads the bilayer. The Cytoplasmic segment spans residues 1344–1431 (YSYFRLKQRT…QQATTVTVPR (88 aa)). The interaction with TMSB4X stretch occupies residues 1368-1378 (WLLASSSPRIS).

Interacts with GULP1, heparin, alpha-M/beta-2 integrin (ITGAM and ITGB2), and thymosin beta 4 (TMSB4X). In terms of processing, glycosylated. Post-translationally, proteolytically processed to yield a 175 kDa protein. As to expression, initially expressed in all vascular cells, including those of sinusoidal-like structures, vitellin veins, and hepatic veins or sinus venosus, in E13.5 fetal liver. The expression then progressively disappears in the portal and hepatic veins, but the expression in sinusoidals endothelial cells (SECs) is retained and becomes stronger during development.

It is found in the cytoplasm. Its subcellular location is the cell membrane. In terms of biological role, phosphatidylserine receptor that enhances the engulfment of apoptotic cells. Hyaluronan receptor that binds to and mediates endocytosis of hyaluronic acid (HA). Also acts, in different species, as a primary systemic scavenger receptor for heparin (Hep), chondroitin sulfate (CS), dermatan sulfate (DS), nonglycosaminoglycan (GAG), acetylated low-density lipoprotein (AcLDL), pro-collagen propeptides and advanced glycation end products (AGE). May serve to maintain tissue integrity by supporting extracellular matrix turnover or it may contribute to maintaining fluidity of bodily liquids by resorption of hyaluronan. Counter receptor which plays an important role in lymphocyte recruitment in the hepatic vasculature. Binds to both Gram-positive and Gram-negative bacteria and may play a role in defense against bacterial infection. The proteolytically processed 175 kDa form also functions as an endocytosis receptor for heparin internalization as well as HA and CS. This chain is Stabilin-2, found in Rattus norvegicus (Rat).